Here is an 887-residue protein sequence, read N- to C-terminus: Alanine--tRNA ligase (887 aa).

Positions 425-441 are enriched in basic and acidic residues; sequence MQEQKSRARSDRREKQQ. The disordered stretch occupies residues 425–448; the sequence is MQEQKSRARSDRREKQQTGDGAGS. Residues histidine 569, histidine 573, cysteine 672, and histidine 676 each contribute to the Zn(2+) site.

It belongs to the class-II aminoacyl-tRNA synthetase family. It depends on Zn(2+) as a cofactor.

The protein localises to the cytoplasm. The catalysed reaction is tRNA(Ala) + L-alanine + ATP = L-alanyl-tRNA(Ala) + AMP + diphosphate. Its function is as follows. Catalyzes the attachment of alanine to tRNA(Ala) in a two-step reaction: alanine is first activated by ATP to form Ala-AMP and then transferred to the acceptor end of tRNA(Ala). Also edits incorrectly charged Ser-tRNA(Ala) and Gly-tRNA(Ala) via its editing domain. In Chlorobium luteolum (strain DSM 273 / BCRC 81028 / 2530) (Pelodictyon luteolum), this protein is Alanine--tRNA ligase.